Here is a 141-residue protein sequence, read N- to C-terminus: Large ribosomal subunit protein uL11 (141 aa).

This sequence belongs to the universal ribosomal protein uL11 family. In terms of assembly, part of the ribosomal stalk of the 50S ribosomal subunit. Interacts with L10 and the large rRNA to form the base of the stalk. L10 forms an elongated spine to which 2 L12 dimers bind in a sequential fashion forming a pentameric L10(L12)2(L12)2 complex. In stalled/isolated 50S subunits interacts with RqcH. Post-translationally, one or more lysine residues are methylated.

Forms part of the ribosomal stalk which helps the ribosome interact with GTP-bound translation factors. Required to recruit RqcH, which is part of the ribosome quality control system (RQC), to stalled 50S ribosomal subunits. This is Large ribosomal subunit protein uL11 from Bacillus subtilis (strain 168).